The primary structure comprises 87 residues: Phospholemman (87 aa).

The signal sequence occupies residues 1 to 20 (MASLSHILVLWVGILTVVNA). Residues 21-35 (EAPQEHDPFTYDYQS) lie on the Extracellular side of the membrane. A helical membrane pass occupies residues 36 to 56 (LRIGGLIIAGILFILGILIVL). Topologically, residues 57 to 87 (SRRCRCKFNQQQSLGKMRSPHLAAQFSSESC) are cytoplasmic. A lipid anchor (S-palmitoyl cysteine) is attached at Cys60. At Cys62 the chain carries S-glutathionyl cysteine; alternate. A lipid anchor (S-palmitoyl cysteine; alternate) is attached at Cys62. Ser75 carries the post-translational modification Phosphoserine; by PKA and PKC. At Ser83 the chain carries Phosphoserine; by PKA.

It belongs to the FXYD family. As to quaternary structure, homotetramer. Monomer. Regulatory subunit of the sodium/potassium-transporting ATPase (NKA) which is composed of a catalytic alpha subunit, a non-catalytic beta subunit and an additional regulatory subunit. The monomeric form associates with NKA while the oligomeric form does not. Interacts with the catalytic alpha-1 subunit ATP1A1. Also interacts with the catalytic alpha-2 and alpha-3 subunits ATP1A2 and ATP1A3. Very little interaction with ATP1A1, ATP1A2 or ATP1A3 when phosphorylated at Ser-83. Interacts with the non-catalytic beta-1 subunit ATP1B1. Oxidative stress decreases interaction with ATP1A1 but increases interaction with ATP1B1. Post-translationally, major plasma membrane substrate for cAMP-dependent protein kinase (PKA) and protein kinase C (PKC) in several different tissues. Phosphorylated in response to insulin and adrenergic stimulation. Phosphorylation at Ser-83 stimulates sodium/potassium-transporting ATPase activity while the unphosphorylated form inhibits sodium/potassium-transporting ATPase activity. Phosphorylation increases tetramerization, decreases binding to ATP1A1 and reduces inhibition of ATP1A1 activity. Phosphorylation at Ser-75 leads to greatly reduced interaction with ATP1A1, ATP1A2 and ATP1A3. May be phosphorylated by DMPK. Palmitoylation increases half-life and stability and is enhanced upon phosphorylation at Ser-83 by PKA.

Its subcellular location is the cell membrane. It localises to the sarcolemma. It is found in the apical cell membrane. The protein localises to the membrane. The protein resides in the caveola. Its subcellular location is the T-tubule. In terms of biological role, associates with and regulates the activity of the sodium/potassium-transporting ATPase (NKA) which transports Na(+) out of the cell and K(+) into the cell. Inhibits NKA activity in its unphosphorylated state and stimulates activity when phosphorylated. Reduces glutathionylation of the NKA beta-1 subunit ATP1B1, thus reversing glutathionylation-mediated inhibition of ATP1B1. Contributes to female sexual development by maintaining the excitability of neurons which secrete gonadotropin-releasing hormone. The sequence is that of Phospholemman from Sus scrofa (Pig).